The following is a 373-amino-acid chain: Queuine tRNA-ribosyltransferase (373 aa).

The active-site Proton acceptor is the Asp-90. Substrate contacts are provided by residues 90–94 (DSGGF), Asp-144, Gln-193, and Gly-220. The interval 251-257 (GVGTPED) is RNA binding. Residue Asp-270 is the Nucleophile of the active site. The RNA binding; important for wobble base 34 recognition stretch occupies residues 275–279 (TRNAR). 4 residues coordinate Zn(2+): Cys-308, Cys-310, Cys-313, and His-339.

Belongs to the queuine tRNA-ribosyltransferase family. In terms of assembly, homodimer. Within each dimer, one monomer is responsible for RNA recognition and catalysis, while the other monomer binds to the replacement base PreQ1. It depends on Zn(2+) as a cofactor.

The enzyme catalyses 7-aminomethyl-7-carbaguanine + guanosine(34) in tRNA = 7-aminomethyl-7-carbaguanosine(34) in tRNA + guanine. It participates in tRNA modification; tRNA-queuosine biosynthesis. Catalyzes the base-exchange of a guanine (G) residue with the queuine precursor 7-aminomethyl-7-deazaguanine (PreQ1) at position 34 (anticodon wobble position) in tRNAs with GU(N) anticodons (tRNA-Asp, -Asn, -His and -Tyr). Catalysis occurs through a double-displacement mechanism. The nucleophile active site attacks the C1' of nucleotide 34 to detach the guanine base from the RNA, forming a covalent enzyme-RNA intermediate. The proton acceptor active site deprotonates the incoming PreQ1, allowing a nucleophilic attack on the C1' of the ribose to form the product. After dissociation, two additional enzymatic reactions on the tRNA convert PreQ1 to queuine (Q), resulting in the hypermodified nucleoside queuosine (7-(((4,5-cis-dihydroxy-2-cyclopenten-1-yl)amino)methyl)-7-deazaguanosine). In Campylobacter jejuni subsp. doylei (strain ATCC BAA-1458 / RM4099 / 269.97), this protein is Queuine tRNA-ribosyltransferase.